The sequence spans 229 residues: Lipoprotein-releasing system ATP-binding protein LolD (229 aa).

Residues 7–229 (LKCKNVTKTY…KNGKLYKKNL (223 aa)) form the ABC transporter domain. 43-50 (GDSGSGKS) serves as a coordination point for ATP.

Belongs to the ABC transporter superfamily. Lipoprotein translocase (TC 3.A.1.125) family. In terms of assembly, the complex is composed of two ATP-binding proteins (LolD) and two transmembrane proteins (LolC and LolE).

It is found in the cell membrane. Functionally, part of the ABC transporter complex LolCDE involved in the translocation of lipoproteins, in an ATP-dependent manner. This is Lipoprotein-releasing system ATP-binding protein LolD from Wigglesworthia glossinidia brevipalpis.